The chain runs to 246 residues: NAD-dependent protein deacylase (246 aa).

Positions 2–246 (PTAVSDAAAP…AGVCLPAMLA (245 aa)) constitute a Deacetylase sirtuin-type domain. 29–49 (GAGVSAESGVPTFRDALTGLW) provides a ligand contact to NAD(+). The substrate site is built by Tyr-74 and Arg-77. NAD(+) is bound at residue 107-110 (QNVD). His-125 (proton acceptor) is an active-site residue. The Zn(2+) site is built by Cys-137, Cys-140, Cys-153, and Cys-156. Residues 193-195 (GTS), 219-221 (NPE), and Ala-237 contribute to the NAD(+) site.

It belongs to the sirtuin family. Class III subfamily. Zn(2+) serves as cofactor.

It is found in the cytoplasm. The catalysed reaction is N(6)-acetyl-L-lysyl-[protein] + NAD(+) + H2O = 2''-O-acetyl-ADP-D-ribose + nicotinamide + L-lysyl-[protein]. It catalyses the reaction N(6)-succinyl-L-lysyl-[protein] + NAD(+) + H2O = 2''-O-succinyl-ADP-D-ribose + nicotinamide + L-lysyl-[protein]. Functionally, NAD-dependent lysine deacetylase and desuccinylase that specifically removes acetyl and succinyl groups on target proteins. Modulates the activities of several proteins which are inactive in their acylated form. The chain is NAD-dependent protein deacylase from Ralstonia nicotianae (strain ATCC BAA-1114 / GMI1000) (Ralstonia solanacearum).